We begin with the raw amino-acid sequence, 675 residues long: DNA ligase (675 aa).

NAD(+) contacts are provided by residues 41–45 (DAEYD), 90–91 (SL), and E120. K122 acts as the N6-AMP-lysine intermediate in catalysis. NAD(+)-binding residues include R143, E178, K295, and K319. Zn(2+)-binding residues include C413, C416, C431, and C436. The BRCT domain maps to 596–675 (GVPQTFAGKT…ADFLQLIDRV (80 aa)).

It belongs to the NAD-dependent DNA ligase family. LigA subfamily. Requires Mg(2+) as cofactor. Mn(2+) serves as cofactor.

The catalysed reaction is NAD(+) + (deoxyribonucleotide)n-3'-hydroxyl + 5'-phospho-(deoxyribonucleotide)m = (deoxyribonucleotide)n+m + AMP + beta-nicotinamide D-nucleotide.. Functionally, DNA ligase that catalyzes the formation of phosphodiester linkages between 5'-phosphoryl and 3'-hydroxyl groups in double-stranded DNA using NAD as a coenzyme and as the energy source for the reaction. It is essential for DNA replication and repair of damaged DNA. The chain is DNA ligase from Heliobacterium modesticaldum (strain ATCC 51547 / Ice1).